A 740-amino-acid polypeptide reads, in one-letter code: Ion-translocating oxidoreductase complex subunit C (740 aa).

4Fe-4S ferredoxin-type domains follow at residues 369–397 (GEPQ…QQLY) and 407–436 (KATT…VQYF). [4Fe-4S] cluster contacts are provided by Cys377, Cys380, Cys383, Cys387, Cys416, Cys419, Cys422, and Cys426. The disordered stretch occupies residues 598–716 (AKARKLEQQQ…EPEEQVDPRK (119 aa)).

This sequence belongs to the 4Fe4S bacterial-type ferredoxin family. RnfC subfamily. The complex is composed of six subunits: RsxA, RsxB, RsxC, RsxD, RsxE and RsxG. [4Fe-4S] cluster serves as cofactor.

The protein localises to the cell inner membrane. Its function is as follows. Part of a membrane-bound complex that couples electron transfer with translocation of ions across the membrane. Required to maintain the reduced state of SoxR. The sequence is that of Ion-translocating oxidoreductase complex subunit C from Shigella flexneri serotype 5b (strain 8401).